The chain runs to 488 residues: Cobyric acid synthase (488 aa).

The GATase cobBQ-type domain occupies 248-441; the sequence is VLRVVVPALP…VHGLFDAPDA (194 aa). Cysteine 328 serves as the catalytic Nucleophile. Histidine 433 is an active-site residue.

It belongs to the CobB/CobQ family. CobQ subfamily.

It participates in cofactor biosynthesis; adenosylcobalamin biosynthesis. Functionally, catalyzes amidations at positions B, D, E, and G on adenosylcobyrinic A,C-diamide. NH(2) groups are provided by glutamine, and one molecule of ATP is hydrogenolyzed for each amidation. This Burkholderia ambifaria (strain ATCC BAA-244 / DSM 16087 / CCUG 44356 / LMG 19182 / AMMD) (Burkholderia cepacia (strain AMMD)) protein is Cobyric acid synthase.